The sequence spans 421 residues: Adenylosuccinate synthetase (421 aa).

Residues 11–17 (GDEGKGK) and 39–41 (GHT) each bind GTP. The Proton acceptor role is filled by Asp-12. Mg(2+)-binding residues include Asp-12 and Gly-39. IMP-binding positions include 12–15 (DEGK), 37–40 (NAGH), Thr-129, Arg-143, Asn-219, Thr-234, and Arg-298. His-40 serves as the catalytic Proton donor. Substrate is bound at residue 294-300 (VTTGRRR). Residues Arg-300, 326–328 (KLD), and 409–411 (GTG) each bind GTP.

It belongs to the adenylosuccinate synthetase family. Homodimer. It depends on Mg(2+) as a cofactor.

It localises to the cytoplasm. The enzyme catalyses IMP + L-aspartate + GTP = N(6)-(1,2-dicarboxyethyl)-AMP + GDP + phosphate + 2 H(+). Its pathway is purine metabolism; AMP biosynthesis via de novo pathway; AMP from IMP: step 1/2. In terms of biological role, plays an important role in the de novo pathway and in the salvage pathway of purine nucleotide biosynthesis. Catalyzes the first committed step in the biosynthesis of AMP from IMP. In Paracoccidioides brasiliensis (strain Pb03), this protein is Adenylosuccinate synthetase.